We begin with the raw amino-acid sequence, 978 residues long: Transcription factor MYCGRDRAFT_87993 (978 aa).

2 consecutive C2H2-type zinc fingers follow at residues 2–24 and 30–52; these read VFCTYCGQSFTRDEHLERHILTH and FKCFTCHMSFARRDLLQRHYTVH. The zn(2)-C6 fungal-type DNA-binding region spans 79-105; sequence CSNCAKTKTKCDKKFPCSRCAGRNLRC. 2 disordered regions span residues 113–231 and 426–445; these read ASKN…SPRF and THREGRGTSNGSHSPNPSGA. The segment covering 152–165 has biased composition (low complexity); sequence SSSPSSQKSGTPIS. Over residues 432 to 445 the composition is skewed to polar residues; the sequence is GTSNGSHSPNPSGA.

The protein localises to the nucleus. In terms of biological role, transcription factor; part of the gene cluster 29 that mediates the biosynthesis of dihydroxynaphthalene (DHN)-melanin, a bluish-green pigment forming a dark layer in the conidial wall that protects the conidia from UV radiations. The protein is Transcription factor MYCGRDRAFT_87993 of Zymoseptoria tritici (strain CBS 115943 / IPO323) (Speckled leaf blotch fungus).